A 299-amino-acid chain; its full sequence is tRNA dimethylallyltransferase (299 aa).

22–29 contributes to the ATP binding site; the sequence is GPTASGKT. 24 to 29 is a substrate binding site; it reads TASGKT. Interaction with substrate tRNA stretches follow at residues 47–50 and 172–176; these read DSRQ and QRLLR.

Belongs to the IPP transferase family. Monomer. Mg(2+) is required as a cofactor.

It carries out the reaction adenosine(37) in tRNA + dimethylallyl diphosphate = N(6)-dimethylallyladenosine(37) in tRNA + diphosphate. Catalyzes the transfer of a dimethylallyl group onto the adenine at position 37 in tRNAs that read codons beginning with uridine, leading to the formation of N6-(dimethylallyl)adenosine (i(6)A). This Endomicrobium trichonymphae protein is tRNA dimethylallyltransferase.